An 81-amino-acid polypeptide reads, in one-letter code: Acylphosphatase (81 aa).

The region spanning 1–81 (MYIFHGRVQG…VKYNDFQIRY (81 aa)) is the Acylphosphatase-like domain. Catalysis depends on residues Arg14 and Asn32.

It belongs to the acylphosphatase family.

The enzyme catalyses an acyl phosphate + H2O = a carboxylate + phosphate + H(+). This Picrophilus torridus (strain ATCC 700027 / DSM 9790 / JCM 10055 / NBRC 100828 / KAW 2/3) protein is Acylphosphatase (acyP).